An 822-amino-acid polypeptide reads, in one-letter code: Fibroblast growth factor receptor 1 (822 aa).

The first 21 residues, 1–21, serve as a signal peptide directing secretion; that stretch reads MWSWKCLLFWAVLVTATLCTA. The Extracellular portion of the chain corresponds to 22 to 376; it reads RPSPTLPEQA…AVMTSPLYLE (355 aa). The Ig-like C2-type 1 domain maps to 25 to 119; it reads PTLPEQAQPW…DTTYFSVNVS (95 aa). Cysteines 55 and 101 form a disulfide. Asn77 and Asn117 each carry an N-linked (GlcNAc...) asparagine glycan. Residues 120 to 154 are disordered; sequence DALPSSEDDDDDDDSSSEEKETDNTKPNRMPVAPY. Residues 125–135 show a composition bias toward acidic residues; it reads SEDDDDDDDSS. The segment covering 136–145 has biased composition (basic and acidic residues); sequence SEEKETDNTK. 2 consecutive Ig-like C2-type domains span residues 158–246 and 255–357; these read PEKM…YQLD and PILQ…AWLT. Residues 160–177 form a heparin-binding region; it reads KMEKKLHAVPAAKTVKFK. Cys178 and Cys230 form a disulfide bridge. N-linked (GlcNAc...) asparagine glycans are attached at residues Asn227, Asn240, Asn264, Asn296, Asn317, and Asn330. Cys277 and Cys341 are disulfide-bonded. The helical transmembrane segment at 377–397 threads the bilayer; that stretch reads IIIYCTGAFLISCMVGSVIVY. Residues 398-822 lie on the Cytoplasmic side of the membrane; that stretch reads KMKSGTKKSD…QLANGGLKRR (425 aa). Tyr463 bears the Phosphotyrosine; by autocatalysis mark. In terms of domain architecture, Protein kinase spans 478-767; sequence LVLGKPLGEG…VALTSNQEYL (290 aa). Residues 484–490, Lys514, 562–564, and Asn568 each bind ATP; these read LGEGCFG and EYA. 2 positions are modified to phosphotyrosine; by autocatalysis: Tyr583 and Tyr585. Asp623 functions as the Proton acceptor in the catalytic mechanism. ATP contacts are provided by Arg627 and Asp641. Phosphotyrosine; by autocatalysis is present on residues Tyr653, Tyr654, Tyr730, and Tyr766. Positions 778–792 are enriched in polar residues; the sequence is PSFPDTRSSTCSSGE. The tract at residues 778–822 is disordered; that stretch reads PSFPDTRSSTCSSGEDSVFSHEPLPEEPCLPRHPAQLANGGLKRR.

It belongs to the protein kinase superfamily. Tyr protein kinase family. Fibroblast growth factor receptor subfamily. In terms of assembly, monomer. Homodimer after ligand binding. Interacts predominantly with FGF1 and FGF2, but can also interact with FGF3, FGF4, FGF5, FGF6, FGF8, FGF10, FGF19, FGF21, FGF22 and FGF23 (in vitro). Ligand specificity is determined by tissue-specific expression of isoforms, and differences in the third Ig-like domain are crucial for ligand specificity. Affinity for fibroblast growth factors (FGFs) is increased by heparan sulfate glycosaminoglycans that function as coreceptors. Likewise, KLB increases the affinity for FGF19, FGF21 and FGF23. Interacts (phosphorylated on Tyr-766) with PLCG1 (via SH2 domains). Interacts with FRS2. Interacts with RPS6KA1. Interacts (via C-terminus) with NEDD4 (via WW3 domain). Interacts with KL. Interacts with SHB (via SH2 domain). Interacts with GRB10. Interacts with ANOS1; this interaction does not interfere with FGF2-binding to FGFR1, but prevents binding of heparin-bound FGF2. Interacts with SOX2 and SOX3. Interacts with FLRT1, FLRT2 and FLRT3. Found in a ternary complex with FGF1 and ITGAV:ITGB3. In terms of processing, autophosphorylated. Binding of FGF family members together with heparan sulfate proteoglycan or heparin promotes receptor dimerization and autophosphorylation on tyrosine residues. Autophosphorylation occurs in trans between the two FGFR molecules present in the dimer and proceeds in a highly ordered manner. Initial autophosphorylation at Tyr-653 increases the kinase activity by a factor of 50 to 100. After this, Tyr-583 becomes phosphorylated, followed by phosphorylation of Tyr-463, Tyr-766, Tyr-583 and Tyr-585. In a third stage, Tyr-654 is autophosphorylated, resulting in a further tenfold increase of kinase activity. Phosphotyrosine residues provide docking sites for interacting proteins and so are crucial for FGFR1 function and its regulation. Ubiquitinated. FGFR1 is rapidly ubiquitinated by NEDD4 after autophosphorylation, leading to internalization and lysosomal degradation. CBL is recruited to activated FGFR1 via FRS2 and GRB2, and mediates ubiquitination and subsequent degradation of FGFR1. Post-translationally, N-glycosylated in the endoplasmic reticulum. The N-glycan chains undergo further maturation to an Endo H-resistant form in the Golgi apparatus. Detected in astrocytoma, neuroblastoma and adrenal cortex cell lines. Some isoforms are detected in foreskin fibroblast cell lines, however isoform 17, isoform 18 and isoform 19 are not detected in these cells.

It localises to the cell membrane. It is found in the nucleus. The protein localises to the cytoplasm. The protein resides in the cytosol. Its subcellular location is the cytoplasmic vesicle. It catalyses the reaction L-tyrosyl-[protein] + ATP = O-phospho-L-tyrosyl-[protein] + ADP + H(+). Its activity is regulated as follows. Present in an inactive conformation in the absence of bound ligand. Ligand binding leads to dimerization and activation by sequential autophosphorylation on tyrosine residues. Inhibited by ARQ 069; this compound maintains the kinase in an inactive conformation and inhibits autophosphorylation. Inhibited by PD173074. Tyrosine-protein kinase that acts as a cell-surface receptor for fibroblast growth factors and plays an essential role in the regulation of embryonic development, cell proliferation, differentiation and migration. Required for normal mesoderm patterning and correct axial organization during embryonic development, normal skeletogenesis and normal development of the gonadotropin-releasing hormone (GnRH) neuronal system. Phosphorylates PLCG1, FRS2, GAB1 and SHB. Ligand binding leads to the activation of several signaling cascades. Activation of PLCG1 leads to the production of the cellular signaling molecules diacylglycerol and inositol 1,4,5-trisphosphate. Phosphorylation of FRS2 triggers recruitment of GRB2, GAB1, PIK3R1 and SOS1, and mediates activation of RAS, MAPK1/ERK2, MAPK3/ERK1 and the MAP kinase signaling pathway, as well as of the AKT1 signaling pathway. Promotes phosphorylation of SHC1, STAT1 and PTPN11/SHP2. In the nucleus, enhances RPS6KA1 and CREB1 activity and contributes to the regulation of transcription. FGFR1 signaling is down-regulated by IL17RD/SEF, and by FGFR1 ubiquitination, internalization and degradation. The polypeptide is Fibroblast growth factor receptor 1 (FGFR1) (Homo sapiens (Human)).